A 386-amino-acid polypeptide reads, in one-letter code: Prostacyclin receptor (386 aa).

Residues 1-16 lie on the Extracellular side of the membrane; sequence MADSCRNLTYVRGSVG. Cystine bridges form between Cys-5/Cys-165 and Cys-92/Cys-170. Asn-7 carries N-linked (GlcNAc...) asparagine glycosylation. A helical membrane pass occupies residues 17-38; that stretch reads PATSTLMFVAGVVGNGLALGIL. Over 39–51 the chain is Cytoplasmic; the sequence is SARRPARPSAFAV. The helical transmembrane segment at 52–76 threads the bilayer; that stretch reads LVTGLAATDLLGTSFLSPAVFVAYA. Residues 77 to 94 are Extracellular-facing; that stretch reads RNSSLLGLARGGPALCDA. A helical membrane pass occupies residues 95–115; it reads FAFAMTFFGLASMLILFAMAV. At 116–134 the chain is on the cytoplasmic side; it reads ERCLALSHPYLYAQLDGPR. A helical membrane pass occupies residues 135–158; the sequence is CARLALPAIYAFCVLFCALPLLGL. Topologically, residues 159 to 181 are extracellular; sequence GQHQQYCPGSWCFLRMRWAQPGG. A helical membrane pass occupies residues 182–208; that stretch reads AAFSLAYAGLVALLVAAIFLCNGSVTL. Residues 209–235 are Cytoplasmic-facing; the sequence is SLCRMYRQQKRHQGSLGPRPRTGEDEV. A helical transmembrane segment spans residues 236-260; it reads DHLILLALMTVVMAVCSLPLTIRCF. Over 261-274 the chain is Extracellular; it reads TQAVAPDSSSEMGD. The chain crosses the membrane as a helical span at residues 275-295; sequence LLAFRFYAFNPILDPWVFILF. Residues 296–386 are Cytoplasmic-facing; sequence RKAVFQRLKL…AEASVACSLC (91 aa). Residues 322-376 are disordered; the sequence is PLSQLASGRRDPRAPSAPVGKEGSCVPLSAWGEGQVEPLPPTQQSSGSAVGTSSK. Residues 363 to 376 are compositionally biased toward polar residues; the sequence is TQQSSGSAVGTSSK. Cys-383 carries the cysteine methyl ester modification. A lipid anchor (S-farnesyl cysteine) is attached at Cys-383. Residues 384-386 constitute a propeptide, removed in mature form; it reads SLC.

This sequence belongs to the G-protein coupled receptor 1 family. In terms of assembly, interacts (non-isoprenylated C-terminus) with PDZK1. In terms of processing, isoprenylation does not influence ligand binding but is required for efficient coupling to the effectors adenylyl cyclase and phospholipase C.

It is found in the cell membrane. Its function is as follows. Receptor for prostacyclin (prostaglandin I2 or PGI2). The activity of this receptor is mediated by G(s) proteins which activate adenylate cyclase. The sequence is that of Prostacyclin receptor (PTGIR) from Homo sapiens (Human).